Here is a 317-residue protein sequence, read N- to C-terminus: Transcription factor EC (317 aa).

Positions 1–90 (MTFDCRVCDQ…GLTDAPCPSI (90 aa)) are necessary for transcriptional transactivation. Positions 110–163 (QKKDNHNLIERRRRYNINYRIKELGTLIPKSNDPDMRWNKGTILKASVDYIKWL) constitute a bHLH domain. A necessary for transcriptional transactivation region spans residues 242 to 317 (TSPEFYEQAV…SLSSEDGDEL (76 aa)).

The protein belongs to the MiT/TFE family. In terms of assembly, homodimer. Forms heterodimers with MITF. Interacts with MITF. Forms heterodimers with TFE3. In terms of tissue distribution, expressed in osteoclast-like cells (at protein level). Expressed in cells of the mononuclear phagocyte lineage. Expressed in macrophages and in osteoclast-like cells.

It localises to the nucleus. Transcriptional regulator that acts as a repressor or an activator. Acts as a transcriptional transactivator on the proximal promoter region of the tartrate-resistant acid phosphatase (TRAP) E-box containing promoter. Collaborates with MITF in target gene activation. Acts as a transcriptional repressor on minimal promoter containing element F (that includes an E-box sequence). Binds to element F in an E-box sequence-specific manner. Acts as a transcriptional repressor on minimal promoter containing mu E3 enhancer sequence. Binds to mu E3 DNA sequence of the immunoglobulin heavy-chain gene enhancer. Binds DNA in a homo- or heterodimeric form. This Mus musculus (Mouse) protein is Transcription factor EC (Tfec).